Here is a 477-residue protein sequence, read N- to C-terminus: ATP synthase subunit beta, chloroplastic (477 aa).

Residue 156–163 participates in ATP binding; sequence GGAGVGKT.

This sequence belongs to the ATPase alpha/beta chains family. F-type ATPases have 2 components, CF(1) - the catalytic core - and CF(0) - the membrane proton channel. CF(1) has five subunits: alpha(3), beta(3), gamma(1), delta(1), epsilon(1). CF(0) has four main subunits: a(1), b(1), b'(1) and c(9-12).

It localises to the plastid. Its subcellular location is the chloroplast thylakoid membrane. It carries out the reaction ATP + H2O + 4 H(+)(in) = ADP + phosphate + 5 H(+)(out). Produces ATP from ADP in the presence of a proton gradient across the membrane. The catalytic sites are hosted primarily by the beta subunits. The sequence is that of ATP synthase subunit beta, chloroplastic from Bigelowiella natans (Pedinomonas minutissima).